The following is a 218-amino-acid chain: GILT-like protein ZK669.3 (218 aa).

The first 21 residues, Met-1–Ala-21, serve as a signal peptide directing secretion. Asn-129 and Asn-185 each carry an N-linked (GlcNAc...) asparagine glycan.

It belongs to the GILT family.

It is found in the secreted. In Caenorhabditis elegans, this protein is GILT-like protein ZK669.3.